The primary structure comprises 155 residues: MSRRGTAEEKTAKSDPIYRNRLVNMLVNRILKHGKKSLAYQIIYRAVKKIQQKTETNPLSVLRQAIHGVTPGIAVKARRVGGSTQQVPIEIGSTQGKALAIRWLLAASRKRPGRNMAFKLSSELVDAAKGSGDAIRKREETHKMAESNRAFAHFR.

The protein belongs to the universal ribosomal protein uS7 family. As to quaternary structure, part of the 30S ribosomal subunit.

The protein localises to the plastid. It is found in the chloroplast. Functionally, one of the primary rRNA binding proteins, it binds directly to 16S rRNA where it nucleates assembly of the head domain of the 30S subunit. This is Small ribosomal subunit protein uS7cz/uS7cy (rps7-A) from Lactuca sativa (Garden lettuce).